We begin with the raw amino-acid sequence, 208 residues long: MNRKNIAKGKLVRRFGINIFEQPKYDKLLKKKPNPPGMHGRSRRAKITEYGKQLIEKQKVKFTYGISERQLTNIFKEARRQHGVTGDNLLALLERRIDNVVYRAGFAISRAHARQIVSHGIIMLNGRRVTIPSITLRANDIIQVKEKDSLKKLVRSNIEKTSTLRKLPTWIEVNADDLNVKITRPPSRDEIPTLANEQMIVEYYSKRA.

Residues 95-157 form the S4 RNA-binding domain; it reads RRIDNVVYRA…DSLKKLVRSN (63 aa).

Belongs to the universal ribosomal protein uS4 family. As to quaternary structure, part of the 30S ribosomal subunit. Contacts protein S5. The interaction surface between S4 and S5 is involved in control of translational fidelity.

Its function is as follows. One of the primary rRNA binding proteins, it binds directly to 16S rRNA where it nucleates assembly of the body of the 30S subunit. With S5 and S12 plays an important role in translational accuracy. This Borrelia hermsii (strain HS1 / DAH) protein is Small ribosomal subunit protein uS4.